The primary structure comprises 131 residues: MALSDPLGDLLTRIRNGQHARKDSVVSPASKLRVRVLDVLAREGYIRGYTEAKLGNHDALRIELKYFEGQPAIHHLARVSKPGRRIYSGSRELPRVRNGLGITIVSTPKGVLSDAEARDQNVGGEVLAEVF.

This sequence belongs to the universal ribosomal protein uS8 family. Part of the 30S ribosomal subunit. Contacts proteins S5 and S12.

One of the primary rRNA binding proteins, it binds directly to 16S rRNA central domain where it helps coordinate assembly of the platform of the 30S subunit. This is Small ribosomal subunit protein uS8 from Zymomonas mobilis subsp. mobilis (strain ATCC 31821 / ZM4 / CP4).